A 238-amino-acid polypeptide reads, in one-letter code: ATP synthase subunit a (238 aa).

The next 5 membrane-spanning stretches (helical) occupy residues glycine 18–glycine 38, phenylalanine 76–proline 96, valine 117–valine 137, leucine 173–threonine 193, and tryptophan 208–tyrosine 230.

This sequence belongs to the ATPase A chain family. In terms of assembly, F-type ATPases have 2 components, CF(1) - the catalytic core - and CF(0) - the membrane proton channel. CF(1) has five subunits: alpha(3), beta(3), gamma(1), delta(1), epsilon(1). CF(0) has three main subunits: a(1), b(2) and c(9-12). The alpha and beta chains form an alternating ring which encloses part of the gamma chain. CF(1) is attached to CF(0) by a central stalk formed by the gamma and epsilon chains, while a peripheral stalk is formed by the delta and b chains.

It is found in the cell membrane. Functionally, key component of the proton channel; it plays a direct role in the translocation of protons across the membrane. This Shouchella clausii (strain KSM-K16) (Alkalihalobacillus clausii) protein is ATP synthase subunit a.